A 343-amino-acid chain; its full sequence is Probable dual-specificity RNA methyltransferase RlmN (343 aa).

Glu-91 (proton acceptor) is an active-site residue. The Radical SAM core domain occupies 97–327; that stretch reads YKHGNSICVS…TTIRREMGSD (231 aa). A disulfide bond links Cys-104 and Cys-332. Positions 111, 115, and 118 each coordinate [4Fe-4S] cluster. Residues 158-159, Ser-190, 213-215, and Asn-289 each bind S-adenosyl-L-methionine; these read GE and SLH. Residue Cys-332 is the S-methylcysteine intermediate of the active site.

The protein belongs to the radical SAM superfamily. RlmN family. [4Fe-4S] cluster is required as a cofactor.

It localises to the cytoplasm. It catalyses the reaction adenosine(2503) in 23S rRNA + 2 reduced [2Fe-2S]-[ferredoxin] + 2 S-adenosyl-L-methionine = 2-methyladenosine(2503) in 23S rRNA + 5'-deoxyadenosine + L-methionine + 2 oxidized [2Fe-2S]-[ferredoxin] + S-adenosyl-L-homocysteine. The catalysed reaction is adenosine(37) in tRNA + 2 reduced [2Fe-2S]-[ferredoxin] + 2 S-adenosyl-L-methionine = 2-methyladenosine(37) in tRNA + 5'-deoxyadenosine + L-methionine + 2 oxidized [2Fe-2S]-[ferredoxin] + S-adenosyl-L-homocysteine. Functionally, specifically methylates position 2 of adenine 2503 in 23S rRNA and position 2 of adenine 37 in tRNAs. The chain is Probable dual-specificity RNA methyltransferase RlmN from Clostridium novyi (strain NT).